The following is a 253-amino-acid chain: Histone-arginine methyltransferase METTL23 (253 aa).

Positions Met-1–Thr-23 are disordered.

It belongs to the methyltransferase superfamily. METTL23 family. Interacts with HSPA5, HSP90B1, TUBULIN, UGGT1 and UGGT2. Interacts with TET3. Interacts with STPG4. As to expression, ubiquitously expressed.

It is found in the nucleus. The protein resides in the cytoplasm. The catalysed reaction is L-arginyl-[protein] + 2 S-adenosyl-L-methionine = N(omega),N(omega)-dimethyl-L-arginyl-[protein] + 2 S-adenosyl-L-homocysteine + 2 H(+). Histone methyltransferase that dimethylates histone H3 at 'Arg-17', forming asymmetric dimethylarginine (H3R17me2a), leading to activate transcription via chromatin remodeling. Maternal factor involved in epigenetic chromatin reprogramming of the paternal genome in the zygote: mediates H3R17me2a, promoting histone H3.3 incorporation in the male pronucleus, leading to TET3 recruitment and subsequent DNA demethylation. This chain is Histone-arginine methyltransferase METTL23, found in Mus musculus (Mouse).